A 312-amino-acid chain; its full sequence is Glycerol-3-phosphate dehydrogenase [NAD(P)+] (312 aa).

Residues Trp11, Arg30, Arg31, and Lys95 each contribute to the NADPH site. Positions 95, 123, and 125 each coordinate sn-glycerol 3-phosphate. Ala127 contacts NADPH. Sn-glycerol 3-phosphate is bound by residues Lys177, Asp230, Ser240, Arg241, and Asn242. Catalysis depends on Lys177, which acts as the Proton acceptor. An NADPH-binding site is contributed by Arg241. 2 residues coordinate NADPH: Val265 and Glu267.

Belongs to the NAD-dependent glycerol-3-phosphate dehydrogenase family.

Its subcellular location is the cytoplasm. The enzyme catalyses sn-glycerol 3-phosphate + NAD(+) = dihydroxyacetone phosphate + NADH + H(+). It catalyses the reaction sn-glycerol 3-phosphate + NADP(+) = dihydroxyacetone phosphate + NADPH + H(+). It participates in membrane lipid metabolism; glycerophospholipid metabolism. Catalyzes the reduction of the glycolytic intermediate dihydroxyacetone phosphate (DHAP) to sn-glycerol 3-phosphate (G3P), the key precursor for phospholipid synthesis. The chain is Glycerol-3-phosphate dehydrogenase [NAD(P)+] from Helicobacter acinonychis (strain Sheeba).